Consider the following 374-residue polypeptide: Nucleosome assembly protein 1;1 (374 aa).

A coiled-coil region spans residues 26–80 (VNALKNKLQDITGKPTNVLECLSPNVRKRVEVLKEIQSQHDELEAKFYEERAVLE). Residues 47-62 (LSPNVRKRVEVLKEIQ) carry the Nuclear export signal motif. The short motif at 223–228 (KKKPKK) is the Nuclear localization signal element. Over residues 299–339 (AAEDDFADLEDDDDDDEEDDDDEDEEEEDDEDDEDEEDEDD) the composition is skewed to acidic residues. The interval 299–374 (AAEDDFADLE…GERPPECKQQ (76 aa)) is disordered. Residues 343-355 (KKKSSAVRKRGVR) show a composition bias toward basic residues. Residue Cys371 is modified to Cysteine methyl ester. Cys371 is lipidated: S-farnesyl cysteine. Positions 372–374 (KQQ) are cleaved as a propeptide — removed in mature form.

It belongs to the nucleosome assembly protein (NAP) family. Binds preferentially histones H4 and H1 in vitro. Interacts with CYCB1;1.

It is found in the nucleus. The protein resides in the cytoplasm. May modulate chromatin structure by regulation of nucleosome assembly/disassembly. Could function together with B-type cyclins in the regulation of microtubule dynamics. This chain is Nucleosome assembly protein 1;1 (NAP1;1), found in Nicotiana tabacum (Common tobacco).